Consider the following 443-residue polypeptide: Glucose-6-phosphate isomerase (443 aa).

The Proton donor role is filled by Glu285. Catalysis depends on residues His306 and Lys420.

It belongs to the GPI family.

The protein resides in the cytoplasm. The enzyme catalyses alpha-D-glucose 6-phosphate = beta-D-fructose 6-phosphate. It functions in the pathway carbohydrate biosynthesis; gluconeogenesis. It participates in carbohydrate degradation; glycolysis; D-glyceraldehyde 3-phosphate and glycerone phosphate from D-glucose: step 2/4. Functionally, catalyzes the reversible isomerization of glucose-6-phosphate to fructose-6-phosphate. The polypeptide is Glucose-6-phosphate isomerase (Staphylococcus aureus (strain bovine RF122 / ET3-1)).